A 53-amino-acid chain; its full sequence is UPF0391 membrane protein KPK_4780 (53 aa).

2 consecutive transmembrane segments (helical) span residues 4-24 (WGIIFLVIALIAAALGFGGLA) and 30-47 (AAKIVFVVGIILFLVSLF).

This sequence belongs to the UPF0391 family.

It is found in the cell membrane. In Klebsiella pneumoniae (strain 342), this protein is UPF0391 membrane protein KPK_4780.